Here is a 475-residue protein sequence, read N- to C-terminus: MISKKVDTQVVIIGSGPSGYSAAFRCSDLGLNVVLIEQYYSLGGVCLNVGCIPSKYLLHIAKVIKDVKKLSRIGISFEKLDINLKEIQCNQKKIIESFSSGISNLARKRNVRIIFGYAKFLDANSIFVQGEHDSYVVSFNKIVIATGSLSKKLSYIPYDDIRIWNSSFAVSIPSIPKKLLIIGGGIIGLEMATIYSALGSNVDIIDNSHDILPHLDRDVIDIFKRSVNHDYNIFFNSNVIKIVQEKNGLLVHIAENDNKNKRFELYDIILVAIGRVPNTDMLDISKVGLKTDNNGFIKVNEQFCTNIPNIYAIGDVIGQPMLAHKGTHEGHIVAEVISGKKHYFNPFVIPCVSYTEPEIAWVGITENEARKNNINYEVSSVLWNTLGRAVSSQCSEGVTKLIFDKKTNKIIGGCIVGSNAGELLGEISLAIEMGCDAEDLALTIHAHPTLYESINLSAQIFQGTITDLINKKIKK.

FAD-binding positions include 37–46 (EQYYSLGGVC), Lys-55, and Ala-118. Residues Cys-46 and Cys-51 are joined by a disulfide bond. NAD(+) is bound by residues 183–187 (GGGII), Asp-206, Val-239, and 272–275 (AIGR). Positions 315 and 323 each coordinate FAD. The Proton acceptor role is filled by His-447.

It belongs to the class-I pyridine nucleotide-disulfide oxidoreductase family. Homodimer. It depends on FAD as a cofactor.

It is found in the cytoplasm. It catalyses the reaction N(6)-[(R)-dihydrolipoyl]-L-lysyl-[protein] + NAD(+) = N(6)-[(R)-lipoyl]-L-lysyl-[protein] + NADH + H(+). Its function is as follows. Lipoamide dehydrogenase is a component of the alpha-ketoacid dehydrogenase complexes. The sequence is that of Dihydrolipoyl dehydrogenase (lpdA) from Buchnera aphidicola subsp. Baizongia pistaciae (strain Bp).